The sequence spans 637 residues: Choline O-acetyltransferase (637 aa).

A compositionally biased stretch (basic and acidic residues) spans 1–13 (MPVSKREQSKDTG). The interval 1–20 (MPVSKREQSKDTGDPCALPK) is disordered. Residue His-329 is the Proton acceptor of the active site. CoA-binding positions include 407–419 (GKEFIKRQKMSPD), Ser-445, and Gln-545.

This sequence belongs to the carnitine/choline acetyltransferase family.

It catalyses the reaction choline + acetyl-CoA = acetylcholine + CoA. In terms of biological role, catalyzes the reversible synthesis of acetylcholine (ACh) from acetyl CoA and choline at cholinergic synapses. This chain is Choline O-acetyltransferase (chat), found in Danio rerio (Zebrafish).